The primary structure comprises 489 residues: MITIPYLTAVSTYFSYGLLFAFGQLRDFFRRFIDWWFTSNLQGYAPICLGHEDFYIRRLYHRIQDCFERPISSAPDAWFDVVERYSNDNNKTLKRTTKTSRCLNLGSYNYLGFGSFDEYCTPRVIESLKKFSASTCSSRVDAGTTSVHAELEECVTRFVGKPAAVVFGMGYATNSAIIPVLIGKGGLIISDSLNHSSIVNGARGSGATIRVFQHNTPSHLERVLREQIAEGQPRTHRPWKKIIVVVEGIYSMEGEICHLPEVVAICKKYKAYVYLDEAHSIGAIGKTGKGICELLGVDTADVDVMMGTFTKSFGSCGGYIAGSKELIQYLKHQCPAHLYATSIPTPSAQQIISAIKVILGEDGSNRGAQKLARIRENSNFFRAELQKMGFEVLGDNDSPVMPIMLYNPAKIPAFSRECLRQKVAVVVVGFPATPLLLARARICISASHSREDLIRALKVISKVGDLSGIKYFPAEPKKIEQSKNDIKLD.

Residues 2–22 (ITIPYLTAVSTYFSYGLLFAF) form a helical membrane-spanning segment. An N6-(pyridoxal phosphate)lysine modification is found at Lys-311.

Belongs to the class-II pyridoxal-phosphate-dependent aminotransferase family. In terms of assembly, heterodimer with LCB1. Component of the serine palmitoyltransferase (SPT) complex, composed of LCB1 and LCB2 (LCB2a or LCB2b). It depends on pyridoxal 5'-phosphate as a cofactor. As to expression, ubiquitous. Detected in leaves, roots, stems, flowers and at a lower level in mature seeds.

The protein localises to the endoplasmic reticulum membrane. The catalysed reaction is L-serine + hexadecanoyl-CoA + H(+) = 3-oxosphinganine + CO2 + CoA. Its pathway is lipid metabolism; sphingolipid metabolism. Serine palmitoyltransferase (SPT). The heterodimer formed with LCB1 constitutes the catalytic core. Involved in the regulation of the programmed cell death (PCD) signaling pathway. Plays an important role during male gametogenesis and embryogenesis. The protein is Long chain base biosynthesis protein 2a (LCB2a) of Arabidopsis thaliana (Mouse-ear cress).